The sequence spans 356 residues: tRNA-specific 2-thiouridylase MnmA (356 aa).

6–13 (AVSGGTDS) serves as a coordination point for ATP. C95 functions as the Nucleophile in the catalytic mechanism. C95 and C195 are joined by a disulfide. G119 contributes to the ATP binding site. Residues 145–147 (KDQ) form an interaction with tRNA region. Catalysis depends on C195, which acts as the Cysteine persulfide intermediate. Residues 300–301 (RY) form an interaction with tRNA region.

Belongs to the MnmA/TRMU family.

Its subcellular location is the cytoplasm. It catalyses the reaction S-sulfanyl-L-cysteinyl-[protein] + uridine(34) in tRNA + AH2 + ATP = 2-thiouridine(34) in tRNA + L-cysteinyl-[protein] + A + AMP + diphosphate + H(+). In terms of biological role, catalyzes the 2-thiolation of uridine at the wobble position (U34) of tRNA, leading to the formation of s(2)U34. In Oleidesulfovibrio alaskensis (strain ATCC BAA-1058 / DSM 17464 / G20) (Desulfovibrio alaskensis), this protein is tRNA-specific 2-thiouridylase MnmA.